Consider the following 672-residue polypeptide: Outer dynein arm-docking complex subunit 4 (672 aa).

TPR repeat units lie at residues 13–46 (FPSY…QDGD), 48–80 (NCLV…DPAF), 81–114 (CKGI…RPDR), 275–311 (LKSL…NKEE), 320–353 (GNLY…AKEY), 360–393 (SRAL…AKTT), 397–430 (TWLF…AEEE), and 437–470 (LNAS…AKLV). Residues 527–544 (RVRDEPEKVVKQWDHSED) show a composition bias toward basic and acidic residues. The segment at 527-672 (RVRDEPEKVV…TGNEMEKEYE (146 aa)) is disordered. The segment covering 545 to 555 (EKETDEDDEAF) has biased composition (acidic residues). Basic and acidic residues-rich tracts occupy residues 595–650 (ETGR…EELG) and 658–672 (GETK…KEYE).

In terms of assembly, component of the outer dynein arm-docking complex along with ODAD1, ODAD2 and ODAD3. Interacts with ODAD1; this interaction may facilitate the recruitment and/or attachment of outer dynein arm docking complex proteins, including ODAD1, ODAD3 and ODAD2, to ciliary axonemes. Interacts with components of the IFT complex A, including IFT140, TTC21B/IFT139 and WDR19/IFT144, and the IFT complex B, including IFT46, IFT52 and IFT57. Interacts with CFAP53. As to expression, expressed in the nasal mucosa (at protein level).

It localises to the cytoplasm. Its subcellular location is the cytoskeleton. It is found in the cilium axoneme. In terms of biological role, component of the outer dynein arm-docking complex (ODA-DC) that mediates outer dynein arms (ODA) binding onto the doublet microtubule. Plays an essential role for the assembly of ODA-DC and for the docking of ODA in ciliary axoneme. In Homo sapiens (Human), this protein is Outer dynein arm-docking complex subunit 4.